The primary structure comprises 172 residues: 3-phenylpropionate/cinnamic acid dioxygenase subunit beta (172 aa).

This sequence belongs to the bacterial ring-hydroxylating dioxygenase beta subunit family. This dioxygenase system consists of four proteins: the two subunits of the hydroxylase component (HcaE and HcaF), a ferredoxin (HcaC) and a ferredoxin reductase (HcaD).

The enzyme catalyses 3-phenylpropanoate + NADH + O2 + H(+) = 3-(cis-5,6-dihydroxycyclohexa-1,3-dien-1-yl)propanoate + NAD(+). The catalysed reaction is (E)-cinnamate + NADH + O2 + H(+) = (2E)-3-(cis-5,6-dihydroxycyclohexa-1,3-dien-1-yl)prop-2-enoate + NAD(+). It functions in the pathway aromatic compound metabolism; 3-phenylpropanoate degradation. Its function is as follows. Part of the multicomponent 3-phenylpropionate dioxygenase. Converts 3-phenylpropionic acid (PP) and cinnamic acid (CI) into 3-phenylpropionate-dihydrodiol (PP-dihydrodiol) and cinnamic acid-dihydrodiol (CI-dihydrodiol), respectively. This Escherichia coli O139:H28 (strain E24377A / ETEC) protein is 3-phenylpropionate/cinnamic acid dioxygenase subunit beta.